The following is a 165-amino-acid chain: Cyclic pyranopterin monophosphate synthase (165 aa).

Residues 76–78 (LCH) and 114–115 (ME) each bind substrate. The active site involves D129.

The protein belongs to the MoaC family. Homohexamer; trimer of dimers.

The enzyme catalyses (8S)-3',8-cyclo-7,8-dihydroguanosine 5'-triphosphate = cyclic pyranopterin phosphate + diphosphate. Its pathway is cofactor biosynthesis; molybdopterin biosynthesis. Catalyzes the conversion of (8S)-3',8-cyclo-7,8-dihydroguanosine 5'-triphosphate to cyclic pyranopterin monophosphate (cPMP). The sequence is that of Cyclic pyranopterin monophosphate synthase from Brucella melitensis biotype 2 (strain ATCC 23457).